Consider the following 68-residue polypeptide: DNA gyrase inhibitor YacG (68 aa).

Residues cysteine 12, cysteine 15, cysteine 30, and cysteine 34 each coordinate Zn(2+). The disordered stretch occupies residues 48-68 (KLKTQDAPTSGKGQHSDDYED).

Belongs to the DNA gyrase inhibitor YacG family. In terms of assembly, interacts with GyrB. Requires Zn(2+) as cofactor.

Functionally, inhibits all the catalytic activities of DNA gyrase by preventing its interaction with DNA. Acts by binding directly to the C-terminal domain of GyrB, which probably disrupts DNA binding by the gyrase. This chain is DNA gyrase inhibitor YacG, found in Acinetobacter baylyi (strain ATCC 33305 / BD413 / ADP1).